Reading from the N-terminus, the 474-residue chain is tRNA-2-methylthio-N(6)-dimethylallyladenosine synthase (474 aa).

In terms of domain architecture, MTTase N-terminal spans 3 to 120; that stretch reads KKLHIKTWGC…LPEMINHVQG (118 aa). 6 residues coordinate [4Fe-4S] cluster: Cys12, Cys49, Cys83, Cys157, Cys161, and Cys164. A Radical SAM core domain is found at 143 to 375; that stretch reads RAEGPTAFVS…QQRISQQAME (233 aa). In terms of domain architecture, TRAM spans 378–441; the sequence is RKMVGTVQRV…ASSLRGILLR (64 aa).

It belongs to the methylthiotransferase family. MiaB subfamily. As to quaternary structure, monomer. [4Fe-4S] cluster serves as cofactor.

The protein resides in the cytoplasm. It catalyses the reaction N(6)-dimethylallyladenosine(37) in tRNA + (sulfur carrier)-SH + AH2 + 2 S-adenosyl-L-methionine = 2-methylsulfanyl-N(6)-dimethylallyladenosine(37) in tRNA + (sulfur carrier)-H + 5'-deoxyadenosine + L-methionine + A + S-adenosyl-L-homocysteine + 2 H(+). Its function is as follows. Catalyzes the methylthiolation of N6-(dimethylallyl)adenosine (i(6)A), leading to the formation of 2-methylthio-N6-(dimethylallyl)adenosine (ms(2)i(6)A) at position 37 in tRNAs that read codons beginning with uridine. The protein is tRNA-2-methylthio-N(6)-dimethylallyladenosine synthase of Yersinia pestis bv. Antiqua (strain Antiqua).